The following is a 239-amino-acid chain: Transmembrane emp24 domain-containing protein 6 (239 aa).

The signal sequence occupies residues 1–21; that stretch reads MFPLLLVAELVVLSLVTSVKS. At 22-200 the chain is on the lumenal side; it reads QETDPLHGSK…FFLLQSNYTY (179 aa). In terms of domain architecture, GOLD spans 53–138; it reads IECFWQFADQ…SIQVYLNFGV (86 aa). 2 N-linked (GlcNAc...) asparagine glycosylation sites follow: Asn-156 and Asn-197. A helical membrane pass occupies residues 201 to 223; the sequence is VNWWSTAQSLAIVLSGALQLYFL. At 224–239 the chain is on the cytoplasmic side; it reads KRLFTASTTDTKKPRC.

It belongs to the EMP24/GP25L family.

It localises to the endoplasmic reticulum membrane. The protein is Transmembrane emp24 domain-containing protein 6 (Tmed6) of Mus musculus (Mouse).